Here is a 1204-residue protein sequence, read N- to C-terminus: Cingulin (1204 aa).

The interval 7 to 359 (MAEPRGPVDH…VMMSSGSSKA (353 aa)) is head. Residues 25-48 (EPVSGAEMGTLRRGGRRPAKDARA) are disordered. A ZIM motif is present at residues 48-62 (ASTYGVAVRVQGIAG). An interaction with TJP1/ZO1 region spans residues 54 to 67 (AVRVQGIAGQPFVV). Residues 68–269 (LNSGEKGGDS…SPLSGLSRAR (202 aa)) form a disordered region. Phosphoserine occurs at positions 95, 96, 98, 135, 137, 140, 155, and 165. Polar residues predominate over residues 126 to 140 (TQWNGKLLRSQSQAS). Over residues 166 to 190 (PGSTIDTAPLSSVDSLINKFDSQLR) the composition is skewed to polar residues. Over residues 207–231 (EQRKRSKSLDSRLPRDTLEERERQS) the composition is skewed to basic and acidic residues. A phosphoserine mark is found at Ser214, Ser217, Ser260, Ser278, Ser340, and Ser353. Positions 360-1161 (VAGQGELTRK…SLEKDSWRKA (802 aa)) form a coiled coil. Lys581 bears the N6-acetyllysine mark. The disordered stretch occupies residues 1156-1182 (DSWRKASRSAAESTLKHEGLSSDEEFD). The segment at 1162–1204 (SRSAAESTLKHEGLSSDEEFDGVYDPSSIASLLTESNLQTSSC) is tail. Phosphoserine is present on residues Ser1176 and Ser1177.

It belongs to the cingulin family. Homodimer. Interacts with TJP1/ZO1 and SPEF1.

It is found in the cell junction. Its subcellular location is the tight junction. In terms of biological role, probably plays a role in the formation and regulation of the tight junction (TJ) paracellular permeability barrier. The polypeptide is Cingulin (Callithrix jacchus (White-tufted-ear marmoset)).